The primary structure comprises 178 residues: N-alpha-acetyltransferase 20 (178 aa).

The region spanning 2 to 157 (TSLRPFTCDD…DAYDMRKALS (156 aa)) is the N-acetyltransferase domain. The segment at 159–178 (DTEKKSIVPLPHPVRPEDIE) is disordered.

This sequence belongs to the acetyltransferase family. ARD1 subfamily. As to quaternary structure, component of the N-terminal acetyltransferase B (NatB) complex which is composed of naa20 and naa25.

It is found in the cytoplasm. Its subcellular location is the nucleus. It catalyses the reaction N-terminal L-methionyl-L-asparaginyl-[protein] + acetyl-CoA = N-terminal N(alpha)-acetyl-L-methionyl-L-asparaginyl-[protein] + CoA + H(+). It carries out the reaction N-terminal L-methionyl-L-glutaminyl-[protein] + acetyl-CoA = N-terminal N(alpha)-acetyl-L-methionyl-L-glutaminyl-[protein] + CoA + H(+). The enzyme catalyses N-terminal L-methionyl-L-aspartyl-[protein] + acetyl-CoA = N-terminal N(alpha)-acetyl-L-methionyl-L-aspartyl-[protein] + CoA + H(+). The catalysed reaction is N-terminal L-methionyl-L-glutamyl-[protein] + acetyl-CoA = N-terminal N(alpha)-acetyl-L-methionyl-L-glutamyl-[protein] + CoA + H(+). Functionally, catalytic subunit of the NatB complex which catalyzes acetylation of the N-terminal methionine residues of peptides beginning with Met-Asp, Met-Glu, Met-Asn and Met-Gln. Proteins with cell cycle functions are overrepresented in the pool of NatB substrates. Required for maintaining the structure and function of actomyosin fibers and for proper cellular migration. The polypeptide is N-alpha-acetyltransferase 20 (naa20) (Xenopus tropicalis (Western clawed frog)).